Consider the following 225-residue polypeptide: NAD(P)H-quinone oxidoreductase subunit K, chloroplastic (225 aa).

[4Fe-4S] cluster contacts are provided by C43, C44, C108, and C139.

It belongs to the complex I 20 kDa subunit family. NDH is composed of at least 16 different subunits, 5 of which are encoded in the nucleus. The cofactor is [4Fe-4S] cluster.

It is found in the plastid. Its subcellular location is the chloroplast thylakoid membrane. The enzyme catalyses a plastoquinone + NADH + (n+1) H(+)(in) = a plastoquinol + NAD(+) + n H(+)(out). The catalysed reaction is a plastoquinone + NADPH + (n+1) H(+)(in) = a plastoquinol + NADP(+) + n H(+)(out). NDH shuttles electrons from NAD(P)H:plastoquinone, via FMN and iron-sulfur (Fe-S) centers, to quinones in the photosynthetic chain and possibly in a chloroplast respiratory chain. The immediate electron acceptor for the enzyme in this species is believed to be plastoquinone. Couples the redox reaction to proton translocation, and thus conserves the redox energy in a proton gradient. The sequence is that of NAD(P)H-quinone oxidoreductase subunit K, chloroplastic from Oryza nivara (Indian wild rice).